Reading from the N-terminus, the 595-residue chain is Beta-(1--&gt;2)glucan export ATP-binding/permease protein NdvA (595 aa).

Residues 21–301 (SLLICSANVM…MSNFINLTIS (281 aa)) form the ABC transmembrane type-1 domain. The next 5 membrane-spanning stretches (helical) occupy residues 22–42 (LLIC…PILF), 55–75 (IIPT…AYVL), 129–149 (IWLD…VLIP), 152–172 (FNMN…YVLI), and 248–268 (MAST…VAKG). The ABC transporter domain occupies 335 to 569 (IQFHHVTYKF…GGRFYKLLKA (235 aa)). 368-375 (GPTGAGKT) lines the ATP pocket.

Belongs to the ABC transporter superfamily. Beta-(1--&gt;2)glucan exporter (TC 3.A.1.108.1) family. As to quaternary structure, homodimer.

It is found in the cell inner membrane. The enzyme catalyses [(1-&gt;2)-beta-D-glucosyl](n)(in) + ATP + H2O = [(1-&gt;2)-beta-D-glucosyl](n)(out) + ADP + phosphate + H(+). Functionally, involved in beta-(1--&gt;2)glucan export. Transmembrane domains (TMD) form a pore in the inner membrane and the ATP-binding domain (NBD) is responsible for energy generation. This Bartonella henselae (strain ATCC 49882 / DSM 28221 / CCUG 30454 / Houston 1) (Rochalimaea henselae) protein is Beta-(1--&gt;2)glucan export ATP-binding/permease protein NdvA.